Consider the following 207-residue polypeptide: 8-oxoguanine DNA glycosylase/AP lyase (207 aa).

Residues Lys128 and Asp146 contribute to the active site.

This sequence belongs to the type-2 OGG1 family.

It carries out the reaction 2'-deoxyribonucleotide-(2'-deoxyribose 5'-phosphate)-2'-deoxyribonucleotide-DNA = a 3'-end 2'-deoxyribonucleotide-(2,3-dehydro-2,3-deoxyribose 5'-phosphate)-DNA + a 5'-end 5'-phospho-2'-deoxyribonucleoside-DNA + H(+). Catalyzes the excision of an oxidatively damaged form of guanine (7,8-dihydro-8-oxoguanine = 8-oxoG) from DNA. Also cleaves the DNA backbone at apurinic/apyrimidinic sites (AP sites). This is 8-oxoguanine DNA glycosylase/AP lyase from Saccharolobus solfataricus (strain ATCC 35092 / DSM 1617 / JCM 11322 / P2) (Sulfolobus solfataricus).